The sequence spans 345 residues: N-acetyl-gamma-glutamyl-phosphate reductase (345 aa).

Residue C149 is part of the active site.

This sequence belongs to the NAGSA dehydrogenase family. Type 1 subfamily.

It is found in the cytoplasm. It carries out the reaction N-acetyl-L-glutamate 5-semialdehyde + phosphate + NADP(+) = N-acetyl-L-glutamyl 5-phosphate + NADPH + H(+). Its pathway is amino-acid biosynthesis; L-arginine biosynthesis; N(2)-acetyl-L-ornithine from L-glutamate: step 3/4. Its function is as follows. Catalyzes the NADPH-dependent reduction of N-acetyl-5-glutamyl phosphate to yield N-acetyl-L-glutamate 5-semialdehyde. The sequence is that of N-acetyl-gamma-glutamyl-phosphate reductase from Bacillus cytotoxicus (strain DSM 22905 / CIP 110041 / 391-98 / NVH 391-98).